A 181-amino-acid polypeptide reads, in one-letter code: Large ribosomal subunit protein uL16 (181 aa).

This sequence belongs to the universal ribosomal protein uL16 family.

In Pyrococcus horikoshii (strain ATCC 700860 / DSM 12428 / JCM 9974 / NBRC 100139 / OT-3), this protein is Large ribosomal subunit protein uL16.